A 618-amino-acid chain; its full sequence is Putative ATP-dependent DNA helicase Q1 (618 aa).

The 176-residue stretch at 95–270 (INAVMSKEDA…KKMLGIPVAI (176 aa)) folds into the Helicase ATP-binding domain. Position 108–115 (108–115 (LSTGGGKS)) interacts with ATP. The DEVH box motif lies at 214-217 (DEVH). Residues 295-443 (CVEKIVRTIK…NLYNMVRYAS (149 aa)) enclose the Helicase C-terminal domain. 4 residues coordinate Zn(2+): Cys-448, Cys-466, Cys-470, and Cys-473. Residues 586–618 (KGRAEENNRKRKAAVTSSDEEVDVGDDDDVITL) are disordered. Residues 603–618 (SDEEVDVGDDDDVITL) are compositionally biased toward acidic residues.

The protein belongs to the helicase family. RecQ subfamily. It depends on Zn(2+) as a cofactor.

Its subcellular location is the nucleus. The catalysed reaction is Couples ATP hydrolysis with the unwinding of duplex DNA by translocating in the 3'-5' direction.. It catalyses the reaction ATP + H2O = ADP + phosphate + H(+). Functionally, DNA helicase that may play a role in the repair of DNA that is damaged by ultraviolet light or other mutagens. Exhibits a magnesium-dependent ATP-dependent DNA-helicase activity that unwinds single- and double-stranded DNA in a 3'-5' direction. The sequence is that of Putative ATP-dependent DNA helicase Q1 from Caenorhabditis briggsae.